Consider the following 787-residue polypeptide: ISWI one complex protein 3 (787 aa).

Over residues 1 to 22 the composition is skewed to polar residues; the sequence is MDSPSNSIQNLQQEAQGSSSAQ. Disordered regions lie at residues 1-137, 672-693, and 749-787; these read MDSP…AHEQ, ILEQ…LPKD, and TEYD…RQRT. A compositionally biased stretch (low complexity) spans 40 to 50; it reads DQSVSVSQSSD. Basic residues predominate over residues 79–92; sequence KPKRKRPAPPKKKA. A compositionally biased stretch (basic and acidic residues) spans 100-137; that stretch reads SNDKVEKKKTTSIAKDGKPTLKTNDKKVAPKPKPAHEQ. Residues 675–689 show a composition bias toward polar residues; it reads QKSTTDNNPSINTNP. The span at 751-777 shows a compositional bias: acidic residues; that stretch reads YDSEEYVDDEEDDEADIYDDNDNDSSF. The segment covering 778 to 787 has biased composition (basic and acidic residues); sequence DDGRVKRQRT.

Component of the ISW1A complex, which at least consists of ISW1 and IOC3.

It is found in the nucleus. Functionally, functions as a component of the ISW1A complex, which acts in remodeling the chromatin by catalyzing an ATP-dependent alteration in the structure of nucleosomal DNA. The ISW1A complex represses gene expression at initiation through specific positioning of a promoter proximal dinucleosome. The protein is ISWI one complex protein 3 (IOC3) of Saccharomyces cerevisiae (strain ATCC 204508 / S288c) (Baker's yeast).